A 187-amino-acid chain; its full sequence is Probable RNA 2'-phosphotransferase (187 aa).

The protein belongs to the KptA/TPT1 family.

Removes the 2'-phosphate from RNA via an intermediate in which the phosphate is ADP-ribosylated by NAD followed by a presumed transesterification to release the RNA and generate ADP-ribose 1''-2''-cyclic phosphate (APPR&gt;P). May function as an ADP-ribosylase. The sequence is that of Probable RNA 2'-phosphotransferase from Pseudomonas syringae pv. tomato (strain ATCC BAA-871 / DC3000).